The following is a 384-amino-acid chain: Dual specificity protein phosphatase 5 (384 aa).

In terms of domain architecture, Rhodanese spans 19 to 141 (AEARCVVLDC…FYSQYPECCV (123 aa)). Residues 53–74 (RRARGGAVSARYVLADEAARAR) carry the Nuclear localization signal motif. The region spanning 178–319 (GPVEILPFLY…LLQYESEILP (142 aa)) is the Tyrosine-protein phosphatase domain. Catalysis depends on Cys-263, which acts as the Phosphocysteine intermediate.

Belongs to the protein-tyrosine phosphatase family. Non-receptor class dual specificity subfamily.

The protein resides in the nucleus. The enzyme catalyses O-phospho-L-tyrosyl-[protein] + H2O = L-tyrosyl-[protein] + phosphate. It carries out the reaction O-phospho-L-seryl-[protein] + H2O = L-seryl-[protein] + phosphate. It catalyses the reaction O-phospho-L-threonyl-[protein] + H2O = L-threonyl-[protein] + phosphate. Functionally, dual specificity protein phosphatase; active with phosphotyrosine, phosphoserine and phosphothreonine residues. The highest relative activity is toward ERK1. In Rattus norvegicus (Rat), this protein is Dual specificity protein phosphatase 5 (Dusp5).